Reading from the N-terminus, the 201-residue chain is 3-isopropylmalate dehydratase small subunit (201 aa).

The protein belongs to the LeuD family. LeuD type 1 subfamily. Heterodimer of LeuC and LeuD.

The catalysed reaction is (2R,3S)-3-isopropylmalate = (2S)-2-isopropylmalate. It functions in the pathway amino-acid biosynthesis; L-leucine biosynthesis; L-leucine from 3-methyl-2-oxobutanoate: step 2/4. In terms of biological role, catalyzes the isomerization between 2-isopropylmalate and 3-isopropylmalate, via the formation of 2-isopropylmaleate. The protein is 3-isopropylmalate dehydratase small subunit of Kineococcus radiotolerans (strain ATCC BAA-149 / DSM 14245 / SRS30216).